A 182-amino-acid polypeptide reads, in one-letter code: Small ribosomal subunit protein uS4c (182 aa).

Residues 82–143 form the S4 RNA-binding domain; it reads MRLDNILFRL…KQRSKALIQN (62 aa).

The protein belongs to the universal ribosomal protein uS4 family. In terms of assembly, part of the 30S ribosomal subunit. Contacts protein S5. The interaction surface between S4 and S5 is involved in control of translational fidelity.

It is found in the plastid. The protein resides in the chloroplast. Functionally, one of the primary rRNA binding proteins, it binds directly to 16S rRNA where it nucleates assembly of the body of the 30S subunit. Its function is as follows. With S5 and S12 plays an important role in translational accuracy. This chain is Small ribosomal subunit protein uS4c (rps4), found in Iris domestica (Leopard lily).